Here is a 217-residue protein sequence, read N- to C-terminus: Small ribosomal subunit protein uS3c (217 aa).

The KH type-2 domain occupies 47–119; that stretch reads VRTHIKSSSN…KLHIAIEKVA (73 aa).

The protein belongs to the universal ribosomal protein uS3 family. As to quaternary structure, part of the 30S ribosomal subunit.

It localises to the plastid. The protein localises to the chloroplast. The sequence is that of Small ribosomal subunit protein uS3c (rps3) from Pinus thunbergii (Japanese black pine).